We begin with the raw amino-acid sequence, 150 residues long: Large ribosomal subunit protein uL13 (150 aa).

Belongs to the universal ribosomal protein uL13 family. In terms of assembly, part of the 50S ribosomal subunit.

Its function is as follows. This protein is one of the early assembly proteins of the 50S ribosomal subunit, although it is not seen to bind rRNA by itself. It is important during the early stages of 50S assembly. The sequence is that of Large ribosomal subunit protein uL13 from Chlorobium phaeobacteroides (strain BS1).